We begin with the raw amino-acid sequence, 93 residues long: MMLLLAILHKNDADYFIAEAMGVKIIEEEAYKKISKETFEEALKELKNSDVVVYTDFPIGEMNELNLKLIEEAKNLKKRMIFYEDDISVLKEI.

To B.subtilis YdcN C-terminal region.

This is an uncharacterized protein from Methanocaldococcus jannaschii (strain ATCC 43067 / DSM 2661 / JAL-1 / JCM 10045 / NBRC 100440) (Methanococcus jannaschii).